Consider the following 476-residue polypeptide: Serine/threonine-protein kinase Chk1 (476 aa).

Residues 1–265 are interaction with CLSPN; sequence MAVPFVEDWD…IPDIKKDRWY (265 aa). One can recognise a Protein kinase domain in the interval 9–265; sequence WDLVQTLGEG…IPDIKKDRWY (257 aa). ATP-binding positions include 15-23 and lysine 38; that span reads LGEGAYGEV. Aspartate 130 serves as the catalytic Proton acceptor. Lysine 132 is covalently cross-linked (Glycyl lysine isopeptide (Lys-Gly) (interchain with G-Cter in ubiquitin)). The interval 267–331 is disordered; that stretch reads KPLNRGAKRP…RTGLSLWDTG (65 aa). At serine 280 the chain carries Phosphoserine; by PKB/AKT1. Over residues 280 to 291 the composition is skewed to low complexity; sequence SGGMSESSSGFS. A phosphoserine mark is found at serine 286, serine 296, and serine 301. The span at 298-320 shows a compositional bias: polar residues; that stretch reads LDFSPVNNGSSEETVKFSSSQPE. The residue at position 317 (serine 317) is a Phosphoserine; by ATM and ATR. Position 345 is a phosphoserine; by ATR (serine 345). Positions 391 to 476 are autoinhibitory region; sequence QCLKETFEKL…SSQKVWFPVT (86 aa). Residue lysine 436 forms a Glycyl lysine isopeptide (Lys-Gly) (interchain with G-Cter in ubiquitin) linkage. 3 positions are modified to phosphoserine: serine 463, serine 467, and serine 468.

Belongs to the protein kinase superfamily. CAMK Ser/Thr protein kinase family. NIM1 subfamily. Interacts (phosphorylated by ATR) with RAD51. Interacts with and phosphorylates CLSPN, an adapter protein that regulates the ATR-dependent phosphorylation of CHEK1. Interacts with BRCA1. Interacts with and phosphorylates CDC25A, CDC25B and CDC25C. Interacts with FBXO6, which regulates CHEK1. Interacts with PPM1D, which regulates CHEK1 through dephosphorylation. Interacts with TIMELESS; DNA damage-dependent. Interacts with FEM1B; activates CHEK1 in response to stress. Interacts with TLK1. Interacts with XPO1 and YWHAZ. Interacts with CDK5RAP3; antagonizes CHEK1. Post-translationally, phosphorylated by ATR in a RAD17-dependent manner in response to ultraviolet irradiation and inhibition of DNA replication. Phosphorylated by ATM in response to ionizing irradiation. ATM and ATR can both phosphorylate Ser-317 and Ser-345 and this results in enhanced kinase activity. Phosphorylation at Ser-345 induces a change in the conformation of the protein, activates the kinase activity and is a prerequisite for interaction with FBXO6 and subsequent ubiquitination at Lys-436. Phosphorylation at Ser-345 also increases binding to 14-3-3 proteins and promotes nuclear retention. Conversely, dephosphorylation at Ser-345 by PPM1D may contribute to exit from checkpoint mediated cell cycle arrest. Phosphorylation at Ser-280 by AKT1/PKB, may promote mono and/or diubiquitination. Also phosphorylated at undefined residues during mitotic arrest, resulting in decreased activity. In terms of processing, ubiquitinated. Mono or diubiquitination promotes nuclear exclusion. The activated form (phosphorylated on Ser-345) is polyubiquitinated at Lys-436 by some SCF-type E3 ubiquitin ligase complex containing FBXO6 promoting its degradation. Ubiquitination and degradation are required to terminate the checkpoint and ensure that activated CHEK1 does not accumulate as cells progress through S phase, when replication forks encounter transient impediments during normal DNA replication. 'Lys-63'-mediated ubiquitination by TRAF4 at Lys-132 activates cell cycle arrest and activation of DNA repair. Proteolytically cleaved at the C-terminus by SPRTN during normal DNA replication, thereby promoting CHEK1 removal from chromatin and activating the protein kinase activity. In terms of tissue distribution, found in all adult tissues tested. Elevated expression in testis, lung and spleen. 15.5 day old embryos show ubiquitous expression with strong expression in brain, liver, kidney, pancreas, intestine, thymus and lung.

The protein localises to the nucleus. It localises to the chromosome. It is found in the cytoplasm. The protein resides in the cytoskeleton. Its subcellular location is the microtubule organizing center. The protein localises to the centrosome. It catalyses the reaction L-seryl-[protein] + ATP = O-phospho-L-seryl-[protein] + ADP + H(+). The catalysed reaction is L-threonyl-[protein] + ATP = O-phospho-L-threonyl-[protein] + ADP + H(+). Activated through phosphorylation predominantly by ATR but also by ATM in response to DNA damage or inhibition of DNA replication. Activation is modulated by several mediators including CLSPN, BRCA1 and FEM1B. Proteolytic cleavage at the C-terminus by SPRTN during normal DNA replication activates the protein kinase activity. In terms of biological role, serine/threonine-protein kinase which is required for checkpoint-mediated cell cycle arrest and activation of DNA repair in response to the presence of DNA damage or unreplicated DNA. May also negatively regulate cell cycle progression during unperturbed cell cycles. This regulation is achieved by a number of mechanisms that together help to preserve the integrity of the genome. Recognizes the substrate consensus sequence [R-X-X-S/T]. Binds to and phosphorylates CDC25A, CDC25B and CDC25C. Phosphorylation of CDC25A at 'Ser-178' and 'Thr-507' and phosphorylation of CDC25C at 'Ser-216' creates binding sites for 14-3-3 proteins which inhibit CDC25A and CDC25C. Phosphorylation of CDC25A at 'Ser-76', 'Ser-124', 'Ser-178', 'Ser-279' and 'Ser-293' promotes proteolysis of CDC25A. Phosphorylation of CDC25A at 'Ser-76' primes the protein for subsequent phosphorylation at 'Ser-79', 'Ser-82' and 'Ser-88' by NEK11, which is required for polyubiquitination and degradation of CDCD25A. Inhibition of CDC25 leads to increased inhibitory tyrosine phosphorylation of CDK-cyclin complexes and blocks cell cycle progression. Also phosphorylates NEK6. Binds to and phosphorylates RAD51 at 'Thr-309', which promotes the release of RAD51 from BRCA2 and enhances the association of RAD51 with chromatin, thereby promoting DNA repair by homologous recombination. Phosphorylates multiple sites within the C-terminus of TP53, which promotes activation of TP53 by acetylation and promotes cell cycle arrest and suppression of cellular proliferation. Also promotes repair of DNA cross-links through phosphorylation of FANCE. Binds to and phosphorylates TLK1 at 'Ser-743', which prevents the TLK1-dependent phosphorylation of the chromatin assembly factor ASF1A. This may enhance chromatin assembly both in the presence or absence of DNA damage. May also play a role in replication fork maintenance through regulation of PCNA. May regulate the transcription of genes that regulate cell-cycle progression through the phosphorylation of histones. Phosphorylates histone H3.1 (to form H3T11ph), which leads to epigenetic inhibition of a subset of genes. May also phosphorylate RB1 to promote its interaction with the E2F family of transcription factors and subsequent cell cycle arrest. Phosphorylates SPRTN, promoting SPRTN recruitment to chromatin. Reduces replication stress and activates the G2/M checkpoint, by phosphorylating and inactivating PABIR1/FAM122A and promoting the serine/threonine-protein phosphatase 2A-mediated dephosphorylation and stabilization of WEE1 levels and activity. The sequence is that of Serine/threonine-protein kinase Chk1 (Chek1) from Mus musculus (Mouse).